The chain runs to 420 residues: Calreticulin (420 aa).

The first 18 residues, Met-1–Ala-18, serve as a signal peptide directing secretion. A disulfide bridge connects residues Cys-106 and Cys-140. An alpha-D-glucoside-binding residues include Tyr-110, Lys-112, Tyr-131, and Asp-138. Repeat copies occupy residues Val-194–Met-205, Asp-213–Glu-224, Asp-230–Asp-241, Asp-248–Asp-259, Gly-263–Pro-273, Gly-277–Pro-287, and Gly-291–Pro-301. A 4 X approximate repeats region spans residues Val-194–Asp-259. Residues Thr-210 to Glu-220 show a composition bias toward basic and acidic residues. The interval Thr-210–Asn-272 is disordered. A compositionally biased stretch (acidic residues) spans Asp-221–Asp-230. The 3 X approximate repeats stretch occupies residues Gly-263–Pro-301. Glu-321 is a binding site for an alpha-D-glucoside. Residues Glu-357–Asp-376 are compositionally biased toward basic and acidic residues. The disordered stretch occupies residues Glu-357–Leu-420. Composition is skewed to acidic residues over residues Glu-385–Glu-398 and Glu-411–Leu-420. Residues His-417–Leu-420 carry the Prevents secretion from ER motif.

The protein belongs to the calreticulin family.

The protein localises to the endoplasmic reticulum lumen. In terms of biological role, molecular calcium-binding chaperone promoting folding, oligomeric assembly and quality control in the ER via the calreticulin/calnexin cycle. This lectin may interact transiently with almost all of the monoglucosylated glycoproteins that are synthesized in the ER. The protein is Calreticulin of Chlamydomonas reinhardtii (Chlamydomonas smithii).